The chain runs to 508 residues: Cobyric acid synthase (508 aa).

A GATase cobBQ-type domain is found at 266–464 (SLRIAVVAYP…AHGLFESTEV (199 aa)). The active-site Nucleophile is C347. The active site involves H456.

The protein belongs to the CobB/CobQ family. CobQ subfamily.

The protein operates within cofactor biosynthesis; adenosylcobalamin biosynthesis. Functionally, catalyzes amidations at positions B, D, E, and G on adenosylcobyrinic A,C-diamide. NH(2) groups are provided by glutamine, and one molecule of ATP is hydrogenolyzed for each amidation. The protein is Cobyric acid synthase of Methylibium petroleiphilum (strain ATCC BAA-1232 / LMG 22953 / PM1).